The sequence spans 431 residues: Chorismate synthase 2, chloroplastic (431 aa).

A chloroplast-targeting transit peptide spans 1-48 (MASSMLTKQFLGAPFSSFGSGQQPSKLCSSNLRFPTHRSQPKRLEIQA). The tract at residues 93–141 (DRRRPGQSRITTPRKETDTCKISSGTADGLTTGSPIKVEVPNTDQRGND) is disordered. Over residues 112–126 (CKISSGTADGLTTGS) the composition is skewed to polar residues.

The protein belongs to the chorismate synthase family. Homotetramer. FMNH2 serves as cofactor. Predominantly expressed in flowers and roots and, to a lesser extent, in stems, leaves, and cotyledons.

It is found in the plastid. The protein resides in the chloroplast. It catalyses the reaction 5-O-(1-carboxyvinyl)-3-phosphoshikimate = chorismate + phosphate. Its pathway is metabolic intermediate biosynthesis; chorismate biosynthesis; chorismate from D-erythrose 4-phosphate and phosphoenolpyruvate: step 7/7. In terms of biological role, catalyzes the last common step of the biosynthesis of aromatic amino acids, produced via the shikimic acid pathway. This Solanum lycopersicum (Tomato) protein is Chorismate synthase 2, chloroplastic (CS2).